The chain runs to 147 residues: Hemoglobin subunit gamma (147 aa).

The 145-residue stretch at 3–147 folds into the Globin domain; it reads HFTAEEKAVI…VAIALAHKYH (145 aa). Positions 64 and 93 each coordinate heme b.

This sequence belongs to the globin family. Heterotetramer of two alpha chains and two gamma chains in fetal hemoglobin (Hb F). Red blood cells.

Functionally, gamma chains make up the fetal hemoglobin F, in combination with alpha chains. The chain is Hemoglobin subunit gamma (HBG) from Eulemur fulvus fulvus (Brown lemur).